The primary structure comprises 208 residues: Holliday junction resolvase RecU (208 aa).

The disordered stretch occupies residues 1-30; it reads MNYPNGKPFNRNKSQVGRTHKGQTSKIDYG. Mg(2+)-binding residues include Thr-87, Asp-89, Glu-102, and Gln-121.

This sequence belongs to the RecU family. It depends on Mg(2+) as a cofactor.

The protein localises to the cytoplasm. It carries out the reaction Endonucleolytic cleavage at a junction such as a reciprocal single-stranded crossover between two homologous DNA duplexes (Holliday junction).. In terms of biological role, endonuclease that resolves Holliday junction intermediates in genetic recombination. Cleaves mobile four-strand junctions by introducing symmetrical nicks in paired strands. Promotes annealing of linear ssDNA with homologous dsDNA. Required for DNA repair, homologous recombination and chromosome segregation. This is Holliday junction resolvase RecU from Staphylococcus saprophyticus subsp. saprophyticus (strain ATCC 15305 / DSM 20229 / NCIMB 8711 / NCTC 7292 / S-41).